The sequence spans 150 residues: C-C motif chemokine 25 (150 aa).

An N-terminal signal peptide occupies residues 1 to 23; it reads MNLWLLACLVAGFLGAWAPAVHT. 2 cysteine pairs are disulfide-bonded: Cys30–Cys58 and Cys31–Cys75.

This sequence belongs to the intercrine beta (chemokine CC) family. In terms of tissue distribution, specifically expressed by thymic dendritic cells. High levels in thymus and small intestine.

It is found in the secreted. In terms of biological role, potentially involved in T-cell development. Recombinant protein shows chemotactic activity on thymocytes, macrophages, THP-1 cells, and dendritics cells but is inactive on peripheral blood lymphocytes and neutrophils. Binds to CCR9. Isoform 2 is an antagonist of isoform 1. Binds to atypical chemokine receptor ACKR4 and mediates the recruitment of beta-arrestin (ARRB1/2) to ACKR4. The sequence is that of C-C motif chemokine 25 (CCL25) from Homo sapiens (Human).